The following is a 235-amino-acid chain: 15,16-dihydrobiliverdin:ferredoxin oxidoreductase (235 aa).

This sequence belongs to the HY2 family.

The enzyme catalyses 15,16-dihydrobiliverdin + oxidized 2[4Fe-4S]-[ferredoxin] = biliverdin IXalpha + reduced 2[4Fe-4S]-[ferredoxin] + 2 H(+). In terms of biological role, catalyzes the two-electron reduction of biliverdin IX-alpha at the C15 methine bridge. The chain is 15,16-dihydrobiliverdin:ferredoxin oxidoreductase from Synechococcus sp. (strain CC9902).